Here is a 251-residue protein sequence, read N- to C-terminus: Flagellar basal-body rod protein FlgF (251 aa).

The protein belongs to the flagella basal body rod proteins family. As to quaternary structure, the basal body constitutes a major portion of the flagellar organelle and consists of five rings (E,L,P,S, and M) mounted on a central rod. The rod consists of about 26 subunits of FlgG in the distal portion, and FlgB, FlgC and FlgF are thought to build up the proximal portion of the rod with about 6 subunits each.

The protein localises to the bacterial flagellum basal body. This Escherichia coli (strain K12) protein is Flagellar basal-body rod protein FlgF (flgF).